Consider the following 750-residue polypeptide: Iron-sulfur clusters transporter ATM1, mitochondrial (750 aa).

A mitochondrion-targeting transit peptide spans 1–16 (MFIRNVKLIKPSPVRF). Topologically, residues 17–124 (ISPIPFSFPI…PKNNLNFKIR (108 aa)) are mitochondrial matrix. Low complexity-rich tracts occupy residues 43-75 (TSNFKSTSSSSSLKSTSTSTSTSTSKTTPKTLS) and 87-100 (DNDTTSSGSSSSEN). Positions 43-100 (TSNFKSTSSSSSLKSTSTSTSTSTSKTTPKTLSKPPPKVKPPIQDNDTTSSGSSSSEN) are disordered. A helical membrane pass occupies residues 125 to 146 (VIIALSLLVGAKILNVQVPFYF). The 291-residue stretch at 125 to 415 (VIIALSLLVG…LGSVYRELKQ (291 aa)) folds into the ABC transmembrane type-1 domain. Residues 147–169 (KQIIDTMNIDWTNEVGVFSTVIG) are Mitochondrial intermembrane-facing. Residues 170-193 (SLILAYGGARFGAVLFGELRNAIF) traverse the membrane as a helical segment. Over 194–242 (ASVAQSAIRRVAYNTFVKLLNMDLQFHLSRQTGGLTRAIDRGTKGISYV) the chain is Mitochondrial matrix. A helical transmembrane segment spans residues 243–266 (LSAMVFHIIPITLEISIVCGILTY). A topological domain (mitochondrial intermembrane) is located at residue Asn-267. Residues 268-288 (YGASFAAMTFVTMLAYSIFTI) traverse the membrane as a helical segment. Over 289–354 (QTTAWRTKFR…SSVKIATSLA (66 aa)) the chain is Mitochondrial matrix. Glutathione-binding positions include 294-298 (RTKFR) and 357-360 (NSGQ). Residues 355–373 (FLNSGQNFIFTSALTAMMY) form a helical membrane-spanning segment. The Mitochondrial intermembrane segment spans residues 374 to 388 (MGCQGVYTGELTVGD). A helical membrane pass occupies residues 389–410 (LVLINQLVFQLSVPLNFLGSVY). Residue Gly-407 participates in glutathione binding. The Mitochondrial matrix segment spans residues 411 to 750 (RELKQSLLDM…LFNSQTFEKK (340 aa)). The disordered stretch occupies residues 437–462 (PNAPPLKLNNNNNNNNNNNNNNNNSL). A compositionally biased stretch (low complexity) spans 445 to 460 (NNNNNNNNNNNNNNNN). An ABC transporter domain is found at 466–702 (IRFENVSFGY…QPNSLYAQLW (237 aa)). Residues Tyr-475 and 499–510 (GPSGSGKSTILR) contribute to the ATP site.

The protein belongs to the ABC transporter superfamily. ABCB family. Heavy Metal importer (TC 3.A.1.210) subfamily. In terms of assembly, homodimer.

It localises to the mitochondrion inner membrane. Functionally, performs an essential function in the generation of cytoplasmic iron-sulfur proteins by mediating the ATP-dependent export of Fe/S cluster precursors synthesized by NFS1 and other mitochondrial proteins. Hydrolyzes ATP. Binds glutathione and may function by transporting a glutathione-conjugated iron-sulfur compound. This Candida albicans (strain SC5314 / ATCC MYA-2876) (Yeast) protein is Iron-sulfur clusters transporter ATM1, mitochondrial.